The sequence spans 349 residues: NADH-quinone oxidoreductase subunit H (349 aa).

The next 8 helical transmembrane spans lie at 14 to 34 (LLVW…GCVA), 85 to 105 (GLFL…WAVI), 120 to 140 (LLYI…AGWA), 164 to 184 (MGFA…VDIV), 196 to 216 (ILSW…ISGV), 243 to 263 (GMAF…VAAL), 285 to 305 (AGGF…FLWF), and 324 to 344 (VFIP…FSPL).

This sequence belongs to the complex I subunit 1 family. As to quaternary structure, NDH-1 is composed of 14 different subunits. Subunits NuoA, H, J, K, L, M, N constitute the membrane sector of the complex.

The protein resides in the cell inner membrane. The enzyme catalyses a quinone + NADH + 5 H(+)(in) = a quinol + NAD(+) + 4 H(+)(out). Functionally, NDH-1 shuttles electrons from NADH, via FMN and iron-sulfur (Fe-S) centers, to quinones in the respiratory chain. The immediate electron acceptor for the enzyme in this species is believed to be ubiquinone. Couples the redox reaction to proton translocation (for every two electrons transferred, four hydrogen ions are translocated across the cytoplasmic membrane), and thus conserves the redox energy in a proton gradient. This subunit may bind ubiquinone. In Chromobacterium violaceum (strain ATCC 12472 / DSM 30191 / JCM 1249 / CCUG 213 / NBRC 12614 / NCIMB 9131 / NCTC 9757 / MK), this protein is NADH-quinone oxidoreductase subunit H.